We begin with the raw amino-acid sequence, 541 residues long: Membrane protein insertase YidC (541 aa).

5 helical membrane-spanning segments follow: residues 6-26, 356-376, 430-450, 463-483, and 498-518; these read FFLI…WEIT, IIHS…LAFY, LPIL…LEMV, LSAP…MFIQ, and IMMA…SGLV.

The protein belongs to the OXA1/ALB3/YidC family. Type 1 subfamily. Interacts with the Sec translocase complex via SecD. Specifically interacts with transmembrane segments of nascent integral membrane proteins during membrane integration.

It is found in the cell inner membrane. Its function is as follows. Required for the insertion and/or proper folding and/or complex formation of integral membrane proteins into the membrane. Involved in integration of membrane proteins that insert both dependently and independently of the Sec translocase complex, as well as at least some lipoproteins. Aids folding of multispanning membrane proteins. The polypeptide is Membrane protein insertase YidC (Vesicomyosocius okutanii subsp. Calyptogena okutanii (strain HA)).